Consider the following 503-residue polypeptide: UDP-N-acetylmuramate--L-alanine ligase (503 aa).

120 to 126 (GTHGKTS) is a binding site for ATP.

This sequence belongs to the MurCDEF family.

The protein resides in the cytoplasm. It carries out the reaction UDP-N-acetyl-alpha-D-muramate + L-alanine + ATP = UDP-N-acetyl-alpha-D-muramoyl-L-alanine + ADP + phosphate + H(+). It functions in the pathway cell wall biogenesis; peptidoglycan biosynthesis. In terms of biological role, cell wall formation. The polypeptide is UDP-N-acetylmuramate--L-alanine ligase (Rhodococcus opacus (strain B4)).